Reading from the N-terminus, the 948-residue chain is Protocadherin alpha-10 (948 aa).

A signal peptide spans 1–28 (MVSRCSCLGVQCLLLSLLLLAAWEVGSG). Cadherin domains lie at 29–132 (QLHY…PPRF), 133–241 (SVTE…APIF), 242–349 (DRPV…SPEV), 350–454 (IVTS…APAF), 455–564 (AQPE…APAL), and 587–689 (GHVV…APEV). The Extracellular segment spans residues 29 to 695 (QLHYSVYEEA…APEVALVDVN (667 aa)). N-linked (GlcNAc...) asparagine glycans are attached at residues Asn-256 and Asn-264. Residue Asn-547 is glycosylated (N-linked (GlcNAc...) asparagine). A helical transmembrane segment spans residues 696-716 (VYLIIAICAVSSLLVLTLLLY). Over 717 to 948 (TALRCSAAPT…GNSTTDNSDQ (232 aa)) the chain is Cytoplasmic. PXXP repeat units lie at residues 732 to 735 (PVKP), 772 to 775 (PSLP), 797 to 800 (PRQP), 830 to 833 (PGGP), 871 to 874 (PGNP), and 889 to 892 (PGSP). The 6 X 4 AA repeats of P-X-X-P stretch occupies residues 732-892 (PVKPTLVCSS…PDKFIIPGSP (161 aa)). 2 disordered regions span residues 783 to 804 (DGEDQSIGGDHSRKPRQPNPDW) and 827 to 948 (RAGP…NSDQ). Positions 907 to 921 (DKSDFITFGKKEETK) are enriched in basic and acidic residues.

It localises to the cell membrane. In terms of biological role, potential calcium-dependent cell-adhesion protein. May be involved in the establishment and maintenance of specific neuronal connections in the brain. This is Protocadherin alpha-10 (PCDHA10) from Pan troglodytes (Chimpanzee).